Reading from the N-terminus, the 142-residue chain is Small ribosomal subunit protein uS12 (142 aa).

The protein belongs to the universal ribosomal protein uS12 family. As to quaternary structure, part of the 30S ribosomal subunit.

Its function is as follows. With S4 and S5 plays an important role in translational accuracy. Located at the interface of the 30S and 50S subunits. The protein is Small ribosomal subunit protein uS12 of Methanothrix thermoacetophila (strain DSM 6194 / JCM 14653 / NBRC 101360 / PT) (Methanosaeta thermophila).